The sequence spans 167 residues: Phospholipase A2 (167 aa).

Positions 38, 40, and 42 each coordinate Ca(2+). 5 cysteine pairs are disulfide-bonded: cysteine 39–cysteine 61, cysteine 60–cysteine 99, cysteine 67–cysteine 92, cysteine 90–cysteine 127, and cysteine 132–cysteine 144. N-linked (GlcNAc...) asparagine glycosylation is present at asparagine 47. Histidine 64 is a catalytic residue. Aspartate 65 is a Ca(2+) binding site. Positions 136–140 (ARSAR) are excised as a propeptide.

This sequence belongs to the phospholipase A2 family. Group III subfamily. Heterodimer composed of a large subunit and a small subunit; disulfide-linked. It depends on Ca(2+) as a cofactor. In terms of tissue distribution, expressed by the venom gland.

The protein localises to the secreted. The catalysed reaction is a 1,2-diacyl-sn-glycero-3-phosphocholine + H2O = a 1-acyl-sn-glycero-3-phosphocholine + a fatty acid + H(+). Its function is as follows. Phospholipase toxin, which catalyzes the calcium-dependent hydrolysis of the 2-acyl groups in 3-sn-phosphoglycerides. Inhibits both skeletal (RYR1) and cardiac (RYR2) ryanodine receptors (calcium release channels). Probably blocks ryanodine receptors by generating a lipid product. Shows hemolytic activity, but it is not know if it is direct or indirect. This Hottentotta tamulus (Eastern Indian scorpion) protein is Phospholipase A2.